A 672-amino-acid chain; its full sequence is DNA ligase (672 aa).

NAD(+) is bound by residues 32–36, 81–82, and E113; these read DAEYD and SL. K115 serves as the catalytic N6-AMP-lysine intermediate. Residues R136, E173, K290, and K314 each coordinate NAD(+). The Zn(2+) site is built by C408, C411, C426, and C432. The 79-residue stretch at 594-672 folds into the BRCT domain; it reads EIDSPFAGKT…EAEMLRLLGE (79 aa).

Belongs to the NAD-dependent DNA ligase family. LigA subfamily. Requires Mg(2+) as cofactor. Mn(2+) serves as cofactor.

It catalyses the reaction NAD(+) + (deoxyribonucleotide)n-3'-hydroxyl + 5'-phospho-(deoxyribonucleotide)m = (deoxyribonucleotide)n+m + AMP + beta-nicotinamide D-nucleotide.. DNA ligase that catalyzes the formation of phosphodiester linkages between 5'-phosphoryl and 3'-hydroxyl groups in double-stranded DNA using NAD as a coenzyme and as the energy source for the reaction. It is essential for DNA replication and repair of damaged DNA. The protein is DNA ligase of Cronobacter sakazakii (strain ATCC BAA-894) (Enterobacter sakazakii).